A 226-amino-acid polypeptide reads, in one-letter code: MSYFVSPQSHLGLLPSGQGGAASSGSSLGLYSPAEPVVVAPGGLGPLSQKAEQVAPAAQAWGPTLAVPEARGCSGGVSWETPRRKEHNRYCPKLPPMRPLESLGWADPCSRSRAPYLGGPSRPRPLLLCGLSPGVLPISSEAGGKEAASQPDICILTLAMMIAGIPTVPVPGLREEDLIRAAQAFMMAHPEPEGAVEGVQWEQAHAHAHMASGQMPLVRSRRGSCL.

A helical transmembrane segment spans residues 153–173 (ICILTLAMMIAGIPTVPVPGL).

The protein belongs to the SPATA25 family. Expressed strongly in testis, weakly in epididymis and not detected in other tissues.

It is found in the membrane. May play a role in spermatogenesis. This Mus musculus (Mouse) protein is Spermatogenesis-associated protein 25 (Spata25).